The chain runs to 233 residues: uncharacterized protein (233 aa).

It belongs to the LutC/YkgG family.

This is an uncharacterized protein from Neisseria meningitidis serogroup B (strain ATCC BAA-335 / MC58).